Consider the following 93-residue polypeptide: Protein Tat (93 aa).

The interval 1-24 is interaction with human CREBBP; sequence MEPVDPELEPWNHPGSQPKTACNN. Residues 1–48 are transactivation; it reads MEPVDPELEPWNHPGSQPKTACNNCHCKVCCYHCVYCFTKKGLGISYG. Zn(2+) is bound by residues Cys22, Cys25, and Cys27. Residues 22–37 are cysteine-rich; sequence CNNCHCKVCCYHCVYC. An N6-acetyllysine; by host PCAF modification is found at Lys28. Zn(2+)-binding residues include Cys30, His33, Cys34, and Cys37. A core region spans residues 38–48; it reads FTKKGLGISYG. Basic residues predominate over residues 48 to 58; sequence GRKKRSQRRRT. Residues 48–93 form a disordered region; the sequence is GRKKRSQRRRTPQSNKSHQDPLPKQPLSQRLGDQTGQKEQKKTLES. Positions 49-57 match the Nuclear localization signal, RNA-binding (TAR), and protein transduction motif; that stretch reads RKKRSQRRR. An interaction with the host capping enzyme RNGTT region spans residues 49 to 86; that stretch reads RKKRSQRRRTPQSNKSHQDPLPKQPLSQRLGDQTGQKE. An N6-acetyllysine; by host EP300 and GCN5L2 mark is found at Lys50 and Lys51. The residue at position 52 (Arg52) is an Asymmetric dimethylarginine; by host PRMT6. Lys71 is covalently cross-linked (Glycyl lysine isopeptide (Lys-Gly) (interchain with G-Cter in ubiquitin)). Polar residues predominate over residues 73–82; it reads PLSQRLGDQT. The span at 83 to 93 shows a compositional bias: basic and acidic residues; that stretch reads GQKEQKKTLES.

The protein belongs to the lentiviruses Tat family. As to quaternary structure, interacts with host CCNT1. Associates with the P-TEFb complex composed at least of Tat, P-TEFb (CDK9 and CCNT1), TAR RNA, RNA Pol II. Recruits the HATs CREBBP, TAF1/TFIID, EP300, PCAF and GCN5L2. Interacts with host KAT5/Tip60; this interaction targets the latter to degradation. Interacts with the host deacetylase SIRT1. Interacts with host capping enzyme RNGTT; this interaction stimulates RNGTT. Binds to host KDR, and to the host integrins ITGAV/ITGB3 and ITGA5/ITGB1. Interacts with host KPNB1/importin beta-1 without previous binding to KPNA1/importin alpha-1. Interacts with EIF2AK2. Interacts with host nucleosome assembly protein NAP1L1; this interaction may be required for the transport of Tat within the nucleus, since the two proteins interact at the nuclear rim. Interacts with host C1QBP/SF2P32; this interaction involves lysine-acetylated Tat. Interacts with the host chemokine receptors CCR2, CCR3 and CXCR4. Interacts with host DPP4/CD26; this interaction may trigger an anti-proliferative effect. Interacts with host LDLR. Interacts with the host extracellular matrix metalloproteinase MMP1. Interacts with host PRMT6; this interaction mediates Tat's methylation. Interacts with, and is ubiquitinated by MDM2/Hdm2. Interacts with host PSMC3 and HTATIP2. Interacts with STAB1; this interaction may overcome SATB1-mediated repression of IL2 and IL2RA (interleukin) in T cells by binding to the same domain than HDAC1. Interacts (when acetylated) with human CDK13, thereby increasing HIV-1 mRNA splicing and promoting the production of the doubly spliced HIV-1 protein Nef. Interacts with host TBP; this interaction modulates the activity of transcriptional pre-initiation complex. Interacts with host RELA. In terms of processing, asymmetrical arginine methylation by host PRMT6 seems to diminish the transactivation capacity of Tat and affects the interaction with host CCNT1. Acetylation by EP300, CREBBP, GCN5L2/GCN5 and PCAF regulates the transactivation activity of Tat. EP300-mediated acetylation of Lys-50 promotes dissociation of Tat from the TAR RNA through the competitive binding to PCAF's bromodomain. In addition, the non-acetylated Tat's N-terminus can also interact with PCAF. PCAF-mediated acetylation of Lys-28 enhances Tat's binding to CCNT1. Lys-50 is deacetylated by SIRT1. Post-translationally, polyubiquitination by host MDM2 does not target Tat to degradation, but activates its transactivation function and fosters interaction with CCNT1 and TAR RNA. In terms of processing, phosphorylated by EIF2AK2 on serine and threonine residues adjacent to the basic region important for TAR RNA binding and function. Phosphorylation of Tat by EIF2AK2 is dependent on the prior activation of EIF2AK2 by dsRNA.

The protein resides in the host nucleus. Its subcellular location is the host nucleolus. It is found in the host cytoplasm. The protein localises to the secreted. Functionally, transcriptional activator that increases RNA Pol II processivity, thereby increasing the level of full-length viral transcripts. Recognizes a hairpin structure at the 5'-LTR of the nascent viral mRNAs referred to as the transactivation responsive RNA element (TAR) and recruits the cyclin T1-CDK9 complex (P-TEFb complex) that will in turn hyperphosphorylate the RNA polymerase II to allow efficient elongation. The CDK9 component of P-TEFb and other Tat-activated kinases hyperphosphorylate the C-terminus of RNA Pol II that becomes stabilized and much more processive. Other factors such as HTATSF1/Tat-SF1, SUPT5H/SPT5, and HTATIP2 are also important for Tat's function. Besides its effect on RNA Pol II processivity, Tat induces chromatin remodeling of proviral genes by recruiting the histone acetyltransferases (HATs) CREBBP, EP300 and PCAF to the chromatin. This also contributes to the increase in proviral transcription rate, especially when the provirus integrates in transcriptionally silent region of the host genome. To ensure maximal activation of the LTR, Tat mediates nuclear translocation of NF-kappa-B by interacting with host RELA. Through its interaction with host TBP, Tat may also modulate transcription initiation. Tat can reactivate a latently infected cell by penetrating in it and transactivating its LTR promoter. In the cytoplasm, Tat is thought to act as a translational activator of HIV-1 mRNAs. In terms of biological role, extracellular circulating Tat can be endocytosed by surrounding uninfected cells via the binding to several surface receptors such as CD26, CXCR4, heparan sulfate proteoglycans (HSPG) or LDLR. Neurons are rarely infected, but they internalize Tat via their LDLR. Through its interaction with nuclear HATs, Tat is potentially able to control the acetylation-dependent cellular gene expression. Modulates the expression of many cellular genes involved in cell survival, proliferation or in coding for cytokines or cytokine receptors. Tat plays a role in T-cell and neurons apoptosis. Tat induced neurotoxicity and apoptosis probably contribute to neuroAIDS. Circulating Tat also acts as a chemokine-like and/or growth factor-like molecule that binds to specific receptors on the surface of the cells, affecting many cellular pathways. In the vascular system, Tat binds to ITGAV/ITGB3 and ITGA5/ITGB1 integrins dimers at the surface of endothelial cells and competes with bFGF for heparin-binding sites, leading to an excess of soluble bFGF. This chain is Protein Tat, found in Pan troglodytes (Chimpanzee).